The primary structure comprises 717 residues: Glutamine--fructose-6-phosphate aminotransferase [isomerizing] (717 aa).

Cys2 acts as the For GATase activity in catalysis. A Glutamine amidotransferase type-2 domain is found at 2–318; that stretch reads CGIFGYCNYL…DDDLAHIYDG (317 aa). A Phosphoserine modification is found at Ser253. Thr334 is modified (phosphothreonine). Ser336 carries the phosphoserine modification. SIS domains follow at residues 390–529 and 562–707; these read WLPV…DRVS and CATE…VDFP.

The catalysed reaction is D-fructose 6-phosphate + L-glutamine = D-glucosamine 6-phosphate + L-glutamate. Its pathway is nucleotide-sugar biosynthesis; UDP-N-acetyl-alpha-D-glucosamine biosynthesis; alpha-D-glucosamine 6-phosphate from D-fructose 6-phosphate: step 1/1. In terms of biological role, involved in amino sugar synthesis (formation of chitin, supplies the amino sugars of asparagine-linked oligosaccharides of glycoproteins). The sequence is that of Glutamine--fructose-6-phosphate aminotransferase [isomerizing] (GFA1) from Saccharomyces cerevisiae (strain ATCC 204508 / S288c) (Baker's yeast).